The chain runs to 89 residues: Exodeoxyribonuclease 7 small subunit (89 aa).

The interval 1–23 is disordered; that stretch reads MRPWRCVSMAKAPAAPSSTQPDP.

The protein belongs to the XseB family. In terms of assembly, heterooligomer composed of large and small subunits.

Its subcellular location is the cytoplasm. It carries out the reaction Exonucleolytic cleavage in either 5'- to 3'- or 3'- to 5'-direction to yield nucleoside 5'-phosphates.. In terms of biological role, bidirectionally degrades single-stranded DNA into large acid-insoluble oligonucleotides, which are then degraded further into small acid-soluble oligonucleotides. In Acidovorax sp. (strain JS42), this protein is Exodeoxyribonuclease 7 small subunit.